A 129-amino-acid polypeptide reads, in one-letter code: Succinate dehydrogenase assembly factor 3, mitochondrial (129 aa).

It belongs to the complex I LYR family. SDHAF3 subfamily. Interacts with the iron-sulfur protein subunit within the SDH catalytic dimer.

The protein localises to the mitochondrion matrix. Functionally, plays an essential role in the assembly of succinate dehydrogenase (SDH), an enzyme complex (also referred to as respiratory complex II) that is a component of both the tricarboxylic acid (TCA) cycle and the mitochondrial electron transport chain, and which couples the oxidation of succinate to fumarate with the reduction of ubiquinone (coenzyme Q) to ubiquinol. Promotes maturation of the iron-sulfur protein subunit of the SDH catalytic dimer, protecting it from the deleterious effects of oxidants. May act together with SDHAF1. In Aspergillus fumigatus (strain ATCC MYA-4609 / CBS 101355 / FGSC A1100 / Af293) (Neosartorya fumigata), this protein is Succinate dehydrogenase assembly factor 3, mitochondrial.